A 243-amino-acid polypeptide reads, in one-letter code: tRNA (guanine-N(7)-)-methyltransferase (243 aa).

Positions 74, 99, 126, and 149 each coordinate S-adenosyl-L-methionine. The active site involves Asp-149. Substrate is bound by residues Lys-153, Asp-185, and 221-224 (TKFE).

The protein belongs to the class I-like SAM-binding methyltransferase superfamily. TrmB family.

It catalyses the reaction guanosine(46) in tRNA + S-adenosyl-L-methionine = N(7)-methylguanosine(46) in tRNA + S-adenosyl-L-homocysteine. It functions in the pathway tRNA modification; N(7)-methylguanine-tRNA biosynthesis. Functionally, catalyzes the formation of N(7)-methylguanine at position 46 (m7G46) in tRNA. This is tRNA (guanine-N(7)-)-methyltransferase from Psychromonas ingrahamii (strain DSM 17664 / CCUG 51855 / 37).